A 366-amino-acid polypeptide reads, in one-letter code: uncharacterized protein (366 aa).

Positions 199–267 (QKKQIEDEEK…QLKDAQAKRD (69 aa)) are disordered.

This is an uncharacterized protein from Haemophilus influenzae (strain ATCC 51907 / DSM 11121 / KW20 / Rd).